A 200-amino-acid chain; its full sequence is Rubrerythrin (200 aa).

Residues 12 to 155 (SIKGSKTEKH…ALLAHVEDGS (144 aa)) form the Ferritin-like diiron domain. Fe(3+)-binding residues include glutamate 29, glutamate 62, glutamate 103, glutamate 106, glutamate 137, histidine 140, cysteine 167, cysteine 170, cysteine 183, and cysteine 186. The Rubredoxin-like domain occupies 162-200 (EIAWQCRNCGYVITSKKAPKLCPACAHPQAYFEPMKTNY).

Homodimer. Possesses two rubredoxin-like centers and two non-sulfur oxo-bridged di-iron centers per dimer. Fe(3+) serves as cofactor.

The protein localises to the cytoplasm. Functionally, may provide oxidative stress protection via catalytic reduction of intracellular hydrogen peroxide. The protein is Rubrerythrin (rbr) of Porphyromonas gingivalis (strain ATCC BAA-308 / W83).